The primary structure comprises 270 residues: Formamidopyrimidine-DNA glycosylase (270 aa).

Pro-2 (schiff-base intermediate with DNA) is an active-site residue. Glu-3 serves as the catalytic Proton donor. Lys-57 acts as the Proton donor; for beta-elimination activity in catalysis. DNA contacts are provided by His-90, Arg-109, and Arg-151. An FPG-type zinc finger spans residues 236–270 (QVYGRGGKLCMVCSNRLKEVRLGQRSTVYCTQCQR). The active-site Proton donor; for delta-elimination activity is the Arg-260.

This sequence belongs to the FPG family. Monomer. Requires Zn(2+) as cofactor.

The catalysed reaction is Hydrolysis of DNA containing ring-opened 7-methylguanine residues, releasing 2,6-diamino-4-hydroxy-5-(N-methyl)formamidopyrimidine.. It catalyses the reaction 2'-deoxyribonucleotide-(2'-deoxyribose 5'-phosphate)-2'-deoxyribonucleotide-DNA = a 3'-end 2'-deoxyribonucleotide-(2,3-dehydro-2,3-deoxyribose 5'-phosphate)-DNA + a 5'-end 5'-phospho-2'-deoxyribonucleoside-DNA + H(+). Involved in base excision repair of DNA damaged by oxidation or by mutagenic agents. Acts as a DNA glycosylase that recognizes and removes damaged bases. Has a preference for oxidized purines, such as 7,8-dihydro-8-oxoguanine (8-oxoG). Has AP (apurinic/apyrimidinic) lyase activity and introduces nicks in the DNA strand. Cleaves the DNA backbone by beta-delta elimination to generate a single-strand break at the site of the removed base with both 3'- and 5'-phosphates. This Idiomarina loihiensis (strain ATCC BAA-735 / DSM 15497 / L2-TR) protein is Formamidopyrimidine-DNA glycosylase.